The primary structure comprises 375 residues: Succinyl-diaminopimelate desuccinylase (375 aa).

A Zn(2+)-binding site is contributed by His75. The active site involves Asp77. Residue Asp106 coordinates Zn(2+). Glu136 serves as the catalytic Proton acceptor. The Zn(2+) site is built by Glu137, Glu165, and His348.

Belongs to the peptidase M20A family. DapE subfamily. As to quaternary structure, homodimer. Requires Zn(2+) as cofactor. It depends on Co(2+) as a cofactor.

The enzyme catalyses N-succinyl-(2S,6S)-2,6-diaminopimelate + H2O = (2S,6S)-2,6-diaminopimelate + succinate. It functions in the pathway amino-acid biosynthesis; L-lysine biosynthesis via DAP pathway; LL-2,6-diaminopimelate from (S)-tetrahydrodipicolinate (succinylase route): step 3/3. Its function is as follows. Catalyzes the hydrolysis of N-succinyl-L,L-diaminopimelic acid (SDAP), forming succinate and LL-2,6-diaminopimelate (DAP), an intermediate involved in the bacterial biosynthesis of lysine and meso-diaminopimelic acid, an essential component of bacterial cell walls. This is Succinyl-diaminopimelate desuccinylase from Novosphingobium aromaticivorans (strain ATCC 700278 / DSM 12444 / CCUG 56034 / CIP 105152 / NBRC 16084 / F199).